Here is a 471-residue protein sequence, read N- to C-terminus: Glutamate--tRNA ligase (471 aa).

The short motif at 9–19 (PSPTGYLHVGG) is the 'HIGH' region element. Zn(2+) is bound by residues C98, C100, C125, and H127. The 'KMSKS' region signature appears at 237 to 241 (KLSKR). K240 contacts ATP.

This sequence belongs to the class-I aminoacyl-tRNA synthetase family. Glutamate--tRNA ligase type 1 subfamily. As to quaternary structure, monomer. Zn(2+) serves as cofactor.

It is found in the cytoplasm. The enzyme catalyses tRNA(Glu) + L-glutamate + ATP = L-glutamyl-tRNA(Glu) + AMP + diphosphate. In terms of biological role, catalyzes the attachment of glutamate to tRNA(Glu) in a two-step reaction: glutamate is first activated by ATP to form Glu-AMP and then transferred to the acceptor end of tRNA(Glu). The sequence is that of Glutamate--tRNA ligase from Salmonella choleraesuis (strain SC-B67).